A 121-amino-acid chain; its full sequence is Small ribosomal subunit protein uS13 (121 aa).

The segment at 94 to 121 (GLPVRGQNTKNNARTRKGPRRTVANKKK) is disordered. Over residues 106–121 (ARTRKGPRRTVANKKK) the composition is skewed to basic residues.

Belongs to the universal ribosomal protein uS13 family. As to quaternary structure, part of the 30S ribosomal subunit. Forms a loose heterodimer with protein S19. Forms two bridges to the 50S subunit in the 70S ribosome.

Its function is as follows. Located at the top of the head of the 30S subunit, it contacts several helices of the 16S rRNA. In the 70S ribosome it contacts the 23S rRNA (bridge B1a) and protein L5 of the 50S subunit (bridge B1b), connecting the 2 subunits; these bridges are implicated in subunit movement. Contacts the tRNAs in the A and P-sites. The protein is Small ribosomal subunit protein uS13 of Geobacillus sp. (strain WCH70).